The following is a 399-amino-acid chain: MKSVEEQLALIKRGAEELLVESELIEKLKRGQPLRIKAGFDPTAPDLHLGHTVLINKLRQFQELGHQVIFLIGDFTGMIGDPSGKSATRPPLTREQVLENAETYKTQVFKILDPAKTEVAFNSTWMDQMGPADFIRLTSQYTVARMLERDDFDKRYTTNQPIAIHEFLYPLVQGYDSVALRADVELGGTDQKFNLLMGRELQRGYGQEAQCILTMPLLEGLDGVKKMSKSLGNYVGIQEAPGVMYSKLVSIPDALMWRYFELLSFRSMDEINAFRADVEAGANPRDIKIKLAEEIVARFHGEEAAANAHRGAGNRMKDGELPDDLPEVELTAAEDMPIAAVLNKAGLVKNSAAARDLLASGGVRVDGEVVDRSFIYVLGATHVCQAGKKAFARITLKSE.

Residues Pro-42–His-51 carry the 'HIGH' region motif. The short motif at Lys-226 to Ser-230 is the 'KMSKS' region element. Position 229 (Lys-229) interacts with ATP. The 61-residue stretch at Met-336–Leu-396 folds into the S4 RNA-binding domain.

This sequence belongs to the class-I aminoacyl-tRNA synthetase family. TyrS type 2 subfamily. In terms of assembly, homodimer.

The protein resides in the cytoplasm. The enzyme catalyses tRNA(Tyr) + L-tyrosine + ATP = L-tyrosyl-tRNA(Tyr) + AMP + diphosphate + H(+). Catalyzes the attachment of tyrosine to tRNA(Tyr) in a two-step reaction: tyrosine is first activated by ATP to form Tyr-AMP and then transferred to the acceptor end of tRNA(Tyr). The sequence is that of Tyrosine--tRNA ligase from Pseudomonas fluorescens (strain Pf0-1).